Consider the following 970-residue polypeptide: Transcriptional activator protein DAL81 (970 aa).

Disordered stretches follow at residues 1-44 (MDPH…NHDI), 64-95 (NILR…QQQS), and 118-140 (DNVS…NNDI). 3 stretches are compositionally biased toward low complexity: residues 15 to 41 (TKSV…NNSN), 73 to 94 (QQQQ…QQQQ), and 121 to 140 (SNSA…NNDI). Residues 150 to 179 (CNQCRLKKTKCNYFPDLGNCLECETSRTKC) constitute a DNA-binding region (zn(2)-C6 fungal-type). Positions 807–823 (SFPNGTTSTTTPVNPTS) are enriched in low complexity. A disordered region spans residues 807–970 (SFPNGTTSTT…VTINTRETPL (164 aa)). Polar residues-rich tracts occupy residues 824-836 (RQTQ…SPAI) and 858-870 (KTSQ…TPSH). Ser-833 bears the Phosphoserine mark. The segment covering 875–894 (PPSNTSSPRVNSSTNVNSNT) has biased composition (low complexity). Residues 895 to 906 (QMNASPLTSINE) are compositionally biased toward polar residues. A compositionally biased stretch (basic and acidic residues) spans 907–938 (TRQESGDAADEKTAGRERTANEESSTELKDDN). Composition is skewed to polar residues over residues 939 to 954 (PNSN…QTIK) and 961 to 970 (VTINTRETPL).

It localises to the nucleus. Functionally, positive regulation of genes required for catabolism of GABA (UGA4, UGA1, and UGA2), urea (DUR1 and DUR2), arginine and allantoin. The protein is Transcriptional activator protein DAL81 (DAL81) of Saccharomyces cerevisiae (strain ATCC 204508 / S288c) (Baker's yeast).